The primary structure comprises 443 residues: 3-isopropylmalate dehydratase large subunit (443 aa).

[4Fe-4S] cluster contacts are provided by C347, C407, and C410.

This sequence belongs to the aconitase/IPM isomerase family. LeuC type 1 subfamily. As to quaternary structure, heterodimer of LeuC and LeuD. [4Fe-4S] cluster is required as a cofactor.

It carries out the reaction (2R,3S)-3-isopropylmalate = (2S)-2-isopropylmalate. It functions in the pathway amino-acid biosynthesis; L-leucine biosynthesis; L-leucine from 3-methyl-2-oxobutanoate: step 2/4. Its function is as follows. Catalyzes the isomerization between 2-isopropylmalate and 3-isopropylmalate, via the formation of 2-isopropylmaleate. In Buchnera aphidicola subsp. Uroleucon aeneum, this protein is 3-isopropylmalate dehydratase large subunit.